A 304-amino-acid polypeptide reads, in one-letter code: Non-specific ribonucleoside hydrolase RihC (304 aa).

The active site involves His-233.

It belongs to the IUNH family. RihC subfamily.

Functionally, hydrolyzes both purine and pyrimidine ribonucleosides with a broad-substrate specificity. In Shigella boydii serotype 18 (strain CDC 3083-94 / BS512), this protein is Non-specific ribonucleoside hydrolase RihC.